The sequence spans 371 residues: Glycosyltransferase 8 domain-containing protein 1 (371 aa).

The Cytoplasmic portion of the chain corresponds to 1–7; the sequence is MSFRKVN. A helical; Signal-anchor for type II membrane protein transmembrane segment spans residues 8 to 28; sequence IIILVLAVALFLLVLHHNFLS. Residues 29-371 lie on the Lumenal side of the membrane; the sequence is LSSLLRNEVT…RRYTEISNIK (343 aa). Asn-249 and Asn-257 each carry an N-linked (GlcNAc...) asparagine glycan.

It belongs to the glycosyltransferase 8 family.

It localises to the membrane. This Homo sapiens (Human) protein is Glycosyltransferase 8 domain-containing protein 1 (GLT8D1).